A 347-amino-acid chain; its full sequence is Protein RecA (347 aa).

68–75 (GPESSGKT) is an ATP binding site.

This sequence belongs to the RecA family.

It localises to the cytoplasm. Its function is as follows. Can catalyze the hydrolysis of ATP in the presence of single-stranded DNA, the ATP-dependent uptake of single-stranded DNA by duplex DNA, and the ATP-dependent hybridization of homologous single-stranded DNAs. It interacts with LexA causing its activation and leading to its autocatalytic cleavage. In Rhodococcus jostii (strain RHA1), this protein is Protein RecA.